The following is a 159-amino-acid chain: Small ribosomal subunit protein uS4 (159 aa).

Residues 106–158 (RRLQTLVFRMGLAKSIHHARQLVVHGHVLVAGRRVTSPGFLVPRELEDKITIE) form the S4 RNA-binding domain.

It belongs to the universal ribosomal protein uS4 family. In terms of assembly, part of the 30S ribosomal subunit. Contacts protein S5. The interaction surface between S4 and S5 is involved in control of translational fidelity.

Its function is as follows. One of the primary rRNA binding proteins, it binds directly to 16S rRNA where it nucleates assembly of the body of the 30S subunit. In terms of biological role, with S5 and S12 plays an important role in translational accuracy. This is Small ribosomal subunit protein uS4 from Pyrobaculum calidifontis (strain DSM 21063 / JCM 11548 / VA1).